The primary structure comprises 451 residues: Bifunctional protein GlmU (451 aa).

A pyrophosphorylase region spans residues 1-229 (MERFAVILAA…FDETIGVNDR (229 aa)). Residues 8-11 (LAAG), Lys-22, Gln-72, and 77-78 (GT) contribute to the UDP-N-acetyl-alpha-D-glucosamine site. Asp-102 provides a ligand contact to Mg(2+). Residues Gly-139, Glu-154, Asn-169, and Asn-227 each coordinate UDP-N-acetyl-alpha-D-glucosamine. Asn-227 serves as a coordination point for Mg(2+). A linker region spans residues 230-250 (VALSQAEAIMRKRTNERLMRE). Residues 251 to 451 (GVTFMDPAST…QTNKEGYTKR (201 aa)) are N-acetyltransferase. 2 residues coordinate UDP-N-acetyl-alpha-D-glucosamine: Arg-332 and Lys-350. The Proton acceptor role is filled by His-362. Positions 365 and 376 each coordinate UDP-N-acetyl-alpha-D-glucosamine. Residues 385–386 (NY), Ala-422, and Arg-439 contribute to the acetyl-CoA site.

In the N-terminal section; belongs to the N-acetylglucosamine-1-phosphate uridyltransferase family. This sequence in the C-terminal section; belongs to the transferase hexapeptide repeat family. Homotrimer. It depends on Mg(2+) as a cofactor.

The protein localises to the cytoplasm. It carries out the reaction alpha-D-glucosamine 1-phosphate + acetyl-CoA = N-acetyl-alpha-D-glucosamine 1-phosphate + CoA + H(+). The catalysed reaction is N-acetyl-alpha-D-glucosamine 1-phosphate + UTP + H(+) = UDP-N-acetyl-alpha-D-glucosamine + diphosphate. It functions in the pathway nucleotide-sugar biosynthesis; UDP-N-acetyl-alpha-D-glucosamine biosynthesis; N-acetyl-alpha-D-glucosamine 1-phosphate from alpha-D-glucosamine 6-phosphate (route II): step 2/2. It participates in nucleotide-sugar biosynthesis; UDP-N-acetyl-alpha-D-glucosamine biosynthesis; UDP-N-acetyl-alpha-D-glucosamine from N-acetyl-alpha-D-glucosamine 1-phosphate: step 1/1. Its pathway is bacterial outer membrane biogenesis; LPS lipid A biosynthesis. Its function is as follows. Catalyzes the last two sequential reactions in the de novo biosynthetic pathway for UDP-N-acetylglucosamine (UDP-GlcNAc). The C-terminal domain catalyzes the transfer of acetyl group from acetyl coenzyme A to glucosamine-1-phosphate (GlcN-1-P) to produce N-acetylglucosamine-1-phosphate (GlcNAc-1-P), which is converted into UDP-GlcNAc by the transfer of uridine 5-monophosphate (from uridine 5-triphosphate), a reaction catalyzed by the N-terminal domain. The sequence is that of Bifunctional protein GlmU from Exiguobacterium sp. (strain ATCC BAA-1283 / AT1b).